The following is an 87-amino-acid chain: Small ribosomal subunit protein uS19 (87 aa).

Belongs to the universal ribosomal protein uS19 family.

Its function is as follows. Protein S19 forms a complex with S13 that binds strongly to the 16S ribosomal RNA. This is Small ribosomal subunit protein uS19 (rpsS) from Mycoplasma genitalium (strain ATCC 33530 / DSM 19775 / NCTC 10195 / G37) (Mycoplasmoides genitalium).